The chain runs to 168 residues: Zinc-finger homeodomain protein 14 (168 aa).

The ZF-HD dimerization-type; degenerate zinc-finger motif lies at 7 to 51 (YRECMRNHAAKLGSYAIDGCREYSQPSTGDLCVACGCHRSYHRRI). The stretch at 76–103 (ARLKWKTAEERNEEEEDDTEETSTEEKM) forms a coiled coil. Positions 82–112 (TAEERNEEEEDDTEETSTEEKMTVQRRRKSK) are disordered. Over residues 86 to 98 (RNEEEEDDTEETS) the composition is skewed to acidic residues. The homeobox DNA-binding region spans 106–168 (QRRRKSKFTA…WVNNNKKFYH (63 aa)).

In terms of assembly, homo- and heterodimer with other ZFHD proteins. Interacts with ZHD11. As to expression, mostly expressed in flowers and stems.

It localises to the nucleus. Its function is as follows. Putative transcription factor. This Arabidopsis thaliana (Mouse-ear cress) protein is Zinc-finger homeodomain protein 14 (ZHD14).